The chain runs to 900 residues: DNA mismatch repair protein MutS (900 aa).

Positions 1-88 (MPGPSDDPTE…PAWAHHSQVD (88 aa)) are disordered. Residues 56 to 68 (APADHNAADHDSN) show a composition bias toward basic and acidic residues. 714-721 (GPNASGKS) contacts ATP.

It belongs to the DNA mismatch repair MutS family.

This protein is involved in the repair of mismatches in DNA. It is possible that it carries out the mismatch recognition step. This protein has a weak ATPase activity. In Parasynechococcus marenigrum (strain WH8102), this protein is DNA mismatch repair protein MutS.